A 961-amino-acid chain; its full sequence is Valine--tRNA ligase (961 aa).

The 'HIGH' region signature appears at 48 to 58 (PNVTGSLHMGH). Residues 560-564 (KMSKS) carry the 'KMSKS' region motif. K563 is an ATP binding site. Residues 892–961 (FINKDTELAR…QAQFKAIEAL (70 aa)) are a coiled coil.

The protein belongs to the class-I aminoacyl-tRNA synthetase family. ValS type 1 subfamily. In terms of assembly, monomer.

The protein resides in the cytoplasm. It catalyses the reaction tRNA(Val) + L-valine + ATP = L-valyl-tRNA(Val) + AMP + diphosphate. In terms of biological role, catalyzes the attachment of valine to tRNA(Val). As ValRS can inadvertently accommodate and process structurally similar amino acids such as threonine, to avoid such errors, it has a 'posttransfer' editing activity that hydrolyzes mischarged Thr-tRNA(Val) in a tRNA-dependent manner. This is Valine--tRNA ligase from Haemophilus ducreyi (strain 35000HP / ATCC 700724).